A 529-amino-acid polypeptide reads, in one-letter code: Ribonuclease Y (529 aa).

Residues 4–24 (GLIYISLEVIVACLISALAMY) traverse the membrane as a helical segment. Residues 216 to 297 (FTNRIALPCS…NRIEEVYHRV (82 aa)) form the KH domain. Residues 342 to 435 (ALQHSKEVAL…VCAADALSAG (94 aa)) form the HD domain.

This sequence belongs to the RNase Y family.

It localises to the cell membrane. Functionally, endoribonuclease that initiates mRNA decay. The protein is Ribonuclease Y of Helicobacter acinonychis (strain Sheeba).